We begin with the raw amino-acid sequence, 402 residues long: Probable 2,3-bisphosphoglycerate-independent phosphoglycerate mutase (402 aa).

Belongs to the BPG-independent phosphoglycerate mutase family. A-PGAM subfamily.

The enzyme catalyses (2R)-2-phosphoglycerate = (2R)-3-phosphoglycerate. It participates in carbohydrate degradation; glycolysis; pyruvate from D-glyceraldehyde 3-phosphate: step 3/5. Catalyzes the interconversion of 2-phosphoglycerate and 3-phosphoglycerate. The polypeptide is Probable 2,3-bisphosphoglycerate-independent phosphoglycerate mutase (Thermosipho melanesiensis (strain DSM 12029 / CIP 104789 / BI429)).